Consider the following 380-residue polypeptide: Cobalt-precorrin-5B C(1)-methyltransferase (380 aa).

Belongs to the CbiD family.

It catalyses the reaction Co-precorrin-5B + S-adenosyl-L-methionine = Co-precorrin-6A + S-adenosyl-L-homocysteine. It participates in cofactor biosynthesis; adenosylcobalamin biosynthesis; cob(II)yrinate a,c-diamide from sirohydrochlorin (anaerobic route): step 6/10. Catalyzes the methylation of C-1 in cobalt-precorrin-5B to form cobalt-precorrin-6A. The chain is Cobalt-precorrin-5B C(1)-methyltransferase from Salinispora arenicola (strain CNS-205).